The following is a 333-amino-acid chain: Transcription termination factor MTERF6, chloroplastic/mitochondrial (333 aa).

Belongs to the mTERF family.

It localises to the plastid. The protein localises to the chloroplast. It is found in the mitochondrion. Functionally, transcription termination factor essential for chloroplast development. Required for maturation of 16S rRNA, 18S rRNA and 23S rRNA in the chloroplast. Binds to a specific region within the tRNA(Ile)(GAU) gene at a position adjacent to and downstream of the 16S rRNA gene. Required for the maturation of tRNA(Ile)(GAU). Binds to double-stranded DNA. In Arabidopsis thaliana (Mouse-ear cress), this protein is Transcription termination factor MTERF6, chloroplastic/mitochondrial.